The following is a 650-amino-acid chain: MDEFREASSVSSSPSTPLRTPLHSPNLFNGDFSVSNRFSFKSSSDYSLSSSFSNGLCSPEDSSSPFSSPPFNGIIPKHNHTSSSPVSFDSLFFKDHEKSHVNGTDDLGLCEDLYRMNIKEDVEEDQIRYARTETLKDPLPKSDHTDFTPDPLYNFSPKHYEPSNGGFVSGGFPYGFFRPPKESSINQSCASWSGFDQSKNDDKRNMFGNNPQQFGWPSYSSSNSGTSPYNNGQEIFENRGGMREYSAYSPPHQPEVSYKHQNYRTTTSDILPLFCQRTQVPMVSKCSEPFSSDESFFMNGKSIDHQRSNTRALMSNNGNPTEICHPSLPNMCDIQGYVYLMAKDQHGCRFLQRIFDEGTSVDAMIIFNEVIAHVVELMMDPFGNYLMQKLLDVCTEEQRTQIVLVATEEPGQLIRISLNAYGTRVVQRLVETIRSGKQISLVKLALRPGFLDLIKDLNGNHVIQRCLQCLSTEDNKFIFDAATKFCTEIATHRHGCCVLQKCIAYSMRQQREKLIAEISRNSLLLAQDPFGNYAVQFVIELRIPSAVAMMLAQLKGHYVQLSMQKFSSHMVERCLMHCPESRPQIVRELVSVPHFDQLLQDPYANFVIQAALAATKGPLHASLVEVIRPHSILRNNPYCKRIFSRNLLKK.

2 disordered regions span residues 1–22 (MDEF…RTPL) and 200–235 (NDDK…GQEI). Residues 1 to 77 (MDEFREASSV…SPPFNGIIPK (77 aa)) constitute a chloroplast transit peptide. 2 stretches are compositionally biased toward low complexity: residues 8 to 22 (SSVS…RTPL) and 217 to 232 (PSYS…YNNG). The PUM-HD domain occupies 308-650 (SNTRALMSNN…RIFSRNLLKK (343 aa)). Pumilio repeat units follow at residues 333–368 (DIQG…IIFN), 369–404 (EVIA…QIVL), 408–443 (EEPG…SLVK), 445–480 (ALRP…FIFD), 481–516 (AATK…KLIA), 517–552 (EISR…MMLA), 553–591 (QLKG…ELVS), and 594–625 (HFDQ…SLVE).

It localises to the plastid. Its subcellular location is the chloroplast. The protein resides in the cytoplasm. Functionally, sequence-specific RNA-binding protein that regulates translation and mRNA stability by binding the 3'-UTR of target mRNAs. The polypeptide is Putative pumilio homolog 7, chloroplastic (APUM7) (Arabidopsis thaliana (Mouse-ear cress)).